The sequence spans 396 residues: Immunoglobulin heavy constant gamma 4 (396 aa).

Residues 1 to 98 (ASTKGPSVFP…PSNTKVDKRV (98 aa)) are CH1. Residues 1–347 (ASTKGPSVFP…DGELDGLWTT (347 aa)) are Extracellular-facing. Ig-like domains are found at residues 6–99 (PSVF…KRVE), 118–217 (PSVF…KTIS), and 226–322 (PQVY…KSLS). An intrachain disulfide couples cysteine 27 to cysteine 83. The segment at 99–110 (ESKYGPPCPSCP) is hinge. The interval 111–220 (APEFLGGPSV…SIEKTISKAK (110 aa)) is CH2. Intrachain disulfides connect cysteine 141–cysteine 201 and cysteine 247–cysteine 305. N-linked (GlcNAc...) (complex) asparagine glycosylation is present at asparagine 177. The interval 221-327 (GQPREPQVYT…QKSLSLSLEL (107 aa)) is CH3. Residues 348 to 368 (ITIFITLFLLSVCYSATVTFF) form a helical membrane-spanning segment. At 369–396 (KVKWIFSSVVDLKQTIVPDYRNMIRQGA) the chain is on the cytoplasmic side.

Immunoglobulins are composed of two identical heavy chains and two identical light chains; disulfide-linked. Post-translationally, glycosylation on Asn-177 is required for interaction with Fc receptors and ability to activate the complement pathway. (Microbial infection) Deglycosylation on Asn-177 by S.pyogenes EndoS or Endos2 endoglucosidases prevents interaction between immunoglobulin-gamma (IgG) and Fc receptors, impairing ability to activate the complement pathway.

Its subcellular location is the secreted. The protein localises to the cell membrane. Constant region of immunoglobulin heavy chains. Immunoglobulins, also known as antibodies, are membrane-bound or secreted glycoproteins produced by B lymphocytes. In the recognition phase of humoral immunity, the membrane-bound immunoglobulins serve as receptors which, upon binding of a specific antigen, trigger the clonal expansion and differentiation of B lymphocytes into immunoglobulins-secreting plasma cells. Secreted immunoglobulins mediate the effector phase of humoral immunity, which results in the elimination of bound antigens. The antigen binding site is formed by the variable domain of one heavy chain, together with that of its associated light chain. Thus, each immunoglobulin has two antigen binding sites with remarkable affinity for a particular antigen. The variable domains are assembled by a process called V-(D)-J rearrangement and can then be subjected to somatic hypermutations which, after exposure to antigen and selection, allow affinity maturation for a particular antigen. The chain is Immunoglobulin heavy constant gamma 4 from Homo sapiens (Human).